Here is a 230-residue protein sequence, read N- to C-terminus: Iron-dependent repressor IdeR (230 aa).

The HTH dtxR-type domain occupies 4–65 (LVDTTEMYLR…VAGNRHLELT (62 aa)).

The protein belongs to the DtxR/MntR family. In terms of assembly, homodimer.

Its subcellular location is the cytoplasm. Functionally, metal-dependent DNA-binding protein that controls transcription of many genes involved in iron metabolism. The polypeptide is Iron-dependent repressor IdeR (ideR) (Mycobacterium leprae (strain TN)).